Reading from the N-terminus, the 209-residue chain is Imidazole glycerol phosphate synthase subunit HisH (209 aa).

Positions 1-205 (MIAIIDYGMG…QGVVEAWKSS (205 aa)) constitute a Glutamine amidotransferase type-1 domain. The active-site Nucleophile is Cys-79. Residues His-180 and Glu-182 contribute to the active site.

In terms of assembly, heterodimer of HisH and HisF.

The protein localises to the cytoplasm. It carries out the reaction 5-[(5-phospho-1-deoxy-D-ribulos-1-ylimino)methylamino]-1-(5-phospho-beta-D-ribosyl)imidazole-4-carboxamide + L-glutamine = D-erythro-1-(imidazol-4-yl)glycerol 3-phosphate + 5-amino-1-(5-phospho-beta-D-ribosyl)imidazole-4-carboxamide + L-glutamate + H(+). It catalyses the reaction L-glutamine + H2O = L-glutamate + NH4(+). It participates in amino-acid biosynthesis; L-histidine biosynthesis; L-histidine from 5-phospho-alpha-D-ribose 1-diphosphate: step 5/9. Its function is as follows. IGPS catalyzes the conversion of PRFAR and glutamine to IGP, AICAR and glutamate. The HisH subunit catalyzes the hydrolysis of glutamine to glutamate and ammonia as part of the synthesis of IGP and AICAR. The resulting ammonia molecule is channeled to the active site of HisF. The chain is Imidazole glycerol phosphate synthase subunit HisH from Bacillus cereus (strain B4264).